The primary structure comprises 333 residues: Neuropeptides B/W receptor type 2 (333 aa).

The Extracellular segment spans residues 1 to 45 (MQAAGHPEPLDSRGSFSLPTMGANVSQDNGTGHNATFSEPLPFLY). N-linked (GlcNAc...) asparagine glycans are attached at residues N24, N29, and N34. A helical transmembrane segment spans residues 46-69 (VLLPAVYSGICAVGLTGNTAVILV). Topologically, residues 70 to 80 (ILRAPKMKTVT) are cytoplasmic. A helical transmembrane segment spans residues 81 to 105 (NVFILNLAVADGLFTLVLPVNIAEH). The Extracellular segment spans residues 106–120 (LLQYWPFGELLCKLV). C117 and C197 are oxidised to a cystine. Residues 121-140 (LAVDHYNIFSSIYFLAVMSV) traverse the membrane as a helical segment. Topologically, residues 141–165 (DRYLVVLATVRSRHMPWRTYRGAKV) are cytoplasmic. Residues 166-185 (ASLCVWLGVTVLVLPFFSFA) form a helical membrane-spanning segment. The Extracellular segment spans residues 186 to 211 (GVYSNELQVPSCGLSFPWPEQVWFKA). The chain crosses the membrane as a helical span at residues 212 to 233 (SRVYTLVLGFVLPVCTICVLYT). Residues 234–257 (DLLRRLRAVRLRSGAKALGKARRK) are Cytoplasmic-facing. The helical transmembrane segment at 258–282 (VTVLVLVVLAVCLLCWTPFHLASVV) threads the bilayer. At 283–292 (ALTTDLPQTP) the chain is on the extracellular side. A helical membrane pass occupies residues 293-307 (LVISMSYVITSLSYA). Topologically, residues 308 to 333 (NSCLNPFLYAFLDDNFRKNFRSILRC) are cytoplasmic.

It belongs to the G-protein coupled receptor 1 family. As to expression, detected at high levels in caudate nucleus, hippocampus and amygdala; at moderate levels in the adult brain, thalamus, parietal cortex, pituitary gland, adrenal gland and lymph nodes.

Its subcellular location is the cell membrane. Its function is as follows. Interacts specifically with a number of opioid ligands. Receptor for neuropeptides B and W, which may be involved in neuroendocrine system regulation, food intake and the organization of other signals. In Homo sapiens (Human), this protein is Neuropeptides B/W receptor type 2 (NPBWR2).